Reading from the N-terminus, the 192-residue chain is uncharacterized protein (192 aa).

One can recognise a Nudix hydrolase domain in the interval 29–160; it reads HRQAAVLIPI…PLDIYRRGDS (132 aa). Residues 67–89 carry the Nudix box motif; sequence GAVDDTDTSVIAAALREAEEEVA. 2 residues coordinate Mg(2+): E83 and E87.

This sequence belongs to the Nudix hydrolase family. PCD1 subfamily. Requires Mn(2+) as cofactor. It depends on Mg(2+) as a cofactor.

Probably mediates the hydrolysis of some nucleoside diphosphate derivatives. This is an uncharacterized protein from Escherichia coli O7:K1 (strain IAI39 / ExPEC).